A 120-amino-acid polypeptide reads, in one-letter code: UPF0342 protein LAF_1331 (120 aa).

It belongs to the UPF0342 family.

In Limosilactobacillus fermentum (strain NBRC 3956 / LMG 18251) (Lactobacillus fermentum), this protein is UPF0342 protein LAF_1331.